Consider the following 223-residue polypeptide: Endonuclease V (223 aa).

Residues Asp35 and Asp103 each contribute to the Mg(2+) site.

This sequence belongs to the endonuclease V family. Mg(2+) is required as a cofactor.

It localises to the cytoplasm. It catalyses the reaction Endonucleolytic cleavage at apurinic or apyrimidinic sites to products with a 5'-phosphate.. Its function is as follows. DNA repair enzyme involved in the repair of deaminated bases. Selectively cleaves double-stranded DNA at the second phosphodiester bond 3' to a deoxyinosine leaving behind the intact lesion on the nicked DNA. This chain is Endonuclease V, found in Salmonella agona (strain SL483).